The sequence spans 327 residues: Metal-binding protein YtgA (327 aa).

An N-terminal signal peptide occupies residues 1 to 20 (MDAKMGYIFKVMRWIFCFVA). Positions 73, 139, 205, and 297 each coordinate Fe(2+).

It belongs to the bacterial solute-binding protein 9 family. Monomer.

It localises to the periplasm. Part of the ATP-binding cassette (ABC) transport system YtgABCD involved in metal import. Binds Fe(2+), Mn(2+) and Ni(2+), with a preference for Fe(2+) and delivers them to the membrane permease for translocation into the cytoplasm. This is Metal-binding protein YtgA from Chlamydia pneumoniae (Chlamydophila pneumoniae).